Here is a 114-residue protein sequence, read N- to C-terminus: Non-specific lipid-transfer protein 1 (114 aa).

A signal peptide spans 1–23; the sequence is MEMVSKIACFVLLCMVVVAPHAE. Cystine bridges form between C27-C73, C37-C50, C51-C96, and C71-C110.

Belongs to the plant LTP family.

Its function is as follows. Plant non-specific lipid-transfer proteins transfer phospholipids as well as galactolipids across membranes. May play a role in wax or cutin deposition in the cell walls of expanding epidermal cells and certain secretory tissues. In Solanum pennellii (Tomato), this protein is Non-specific lipid-transfer protein 1 (LTP1).